The chain runs to 695 residues: Elongation factor G (695 aa).

The region spanning 12–286 (DKLRNIGIMA…AVIDYLPSPL (275 aa)) is the tr-type G domain. Residues 21 to 28 (AHIDAGKT), 85 to 89 (DTPGH), and 139 to 142 (NKMD) each bind GTP.

It belongs to the TRAFAC class translation factor GTPase superfamily. Classic translation factor GTPase family. EF-G/EF-2 subfamily.

The protein resides in the cytoplasm. Its function is as follows. Catalyzes the GTP-dependent ribosomal translocation step during translation elongation. During this step, the ribosome changes from the pre-translocational (PRE) to the post-translocational (POST) state as the newly formed A-site-bound peptidyl-tRNA and P-site-bound deacylated tRNA move to the P and E sites, respectively. Catalyzes the coordinated movement of the two tRNA molecules, the mRNA and conformational changes in the ribosome. This is Elongation factor G from Thermotoga sp. (strain RQ2).